Consider the following 357-residue polypeptide: Putative F-box protein At5g50220 (357 aa).

One can recognise an F-box domain in the interval I27–S73.

The protein is Putative F-box protein At5g50220 of Arabidopsis thaliana (Mouse-ear cress).